We begin with the raw amino-acid sequence, 160 residues long: Cytochrome b6-f complex subunit 4 (160 aa).

Helical transmembrane passes span 36 to 56 (LLYI…GLSV), 95 to 115 (LLGI…PFIE), and 128 to 148 (IAMA…IGAA).

The protein belongs to the cytochrome b family. PetD subfamily. In terms of assembly, the 4 large subunits of the cytochrome b6-f complex are cytochrome b6, subunit IV (17 kDa polypeptide, PetD), cytochrome f and the Rieske protein, while the 4 small subunits are PetG, PetL, PetM and PetN. The complex functions as a dimer.

Its subcellular location is the cellular thylakoid membrane. Its function is as follows. Component of the cytochrome b6-f complex, which mediates electron transfer between photosystem II (PSII) and photosystem I (PSI), cyclic electron flow around PSI, and state transitions. This is Cytochrome b6-f complex subunit 4 from Synechococcus sp. (strain CC9311).